A 220-amino-acid polypeptide reads, in one-letter code: Kinetochore protein Spc25 (220 aa).

Residues 41–119 (ILLDVKEAAA…NEIMERIHTL (79 aa)) adopt a coiled-coil conformation.

It belongs to the SPC25 family. Component of the Ndc80 complex, which is composed of Ndc80, Nuf2 and Spc25.

The protein localises to the nucleus. The protein resides in the chromosome. It is found in the centromere. It localises to the kinetochore. Functionally, acts as a component of the essential kinetochore-associated Ndc80 complex, which is required for chromosome segregation and spindle checkpoint activity during meiosis and mitosis. Required for kinetochore integrity and the organization of stable microtubule binding sites in the outer plate of the kinetochore. Participates in SAC signaling that responds specifically to disruptions in spindle microtubule dynamics. The NDC80 complex synergistically enhances the affinity of the SKA1 complex for microtubules and may allow the NDC80 complex to track depolymerizing microtubules. The protein is Kinetochore protein Spc25 of Drosophila erecta (Fruit fly).